A 212-amino-acid chain; its full sequence is Penicillin-binding protein activator LpoB (212 aa).

Residues Met-1–Gly-19 form the signal peptide. Residue Cys-20 is the site of N-palmitoyl cysteine attachment. Cys-20 is lipidated: S-diacylglycerol cysteine. The disordered stretch occupies residues Pro-28–Lys-73. Over residues Pro-36 to Pro-49 the composition is skewed to pro residues.

It belongs to the LpoB family. In terms of assembly, interacts with PBP1b.

The protein localises to the cell outer membrane. Its function is as follows. Regulator of peptidoglycan synthesis that is essential for the function of penicillin-binding protein 1B (PBP1b). The chain is Penicillin-binding protein activator LpoB from Salmonella typhimurium (strain LT2 / SGSC1412 / ATCC 700720).